We begin with the raw amino-acid sequence, 112 residues long: Putative pterin-4-alpha-carbinolamine dehydratase (112 aa).

Belongs to the pterin-4-alpha-carbinolamine dehydratase family.

The catalysed reaction is (4aS,6R)-4a-hydroxy-L-erythro-5,6,7,8-tetrahydrobiopterin = (6R)-L-erythro-6,7-dihydrobiopterin + H2O. The protein is Putative pterin-4-alpha-carbinolamine dehydratase of Shewanella sp. (strain MR-7).